Reading from the N-terminus, the 321-residue chain is Torsin-2A (321 aa).

Positions 1 to 26 are cleaved as a signal peptide; that stretch reads MAVARHGYRPWGSILGLLGLALAAAA. An ATP-binding site is contributed by 93–100; that stretch reads GWTGTGKS. Asparagine 149 carries an N-linked (GlcNAc...) asparagine glycan.

This sequence belongs to the ClpA/ClpB family. Torsin subfamily. Homohexamer. Interacts with TOR1AIP1. N-glycosylated. Expressed at similar levels in liver, muscle and brain (at protein level).

It is found in the endoplasmic reticulum lumen. The protein is Torsin-2A (Tor2a) of Mus musculus (Mouse).